The sequence spans 428 residues: Adenylosuccinate synthetase (428 aa).

Residues 12–18 (GDEGKGK) and 40–42 (GHT) each bind GTP. The active-site Proton acceptor is the aspartate 13. Mg(2+)-binding residues include aspartate 13 and glycine 40. IMP contacts are provided by residues 13–16 (DEGK), 38–41 (NAGH), threonine 128, arginine 142, glutamine 223, threonine 238, and arginine 302. Histidine 41 functions as the Proton donor in the catalytic mechanism. Residue 298 to 304 (VTTGRPR) participates in substrate binding. Residues arginine 304, 330–332 (KLD), and 412–414 (GTG) contribute to the GTP site.

Belongs to the adenylosuccinate synthetase family. As to quaternary structure, homodimer. Mg(2+) serves as cofactor.

The protein resides in the cytoplasm. It carries out the reaction IMP + L-aspartate + GTP = N(6)-(1,2-dicarboxyethyl)-AMP + GDP + phosphate + 2 H(+). It functions in the pathway purine metabolism; AMP biosynthesis via de novo pathway; AMP from IMP: step 1/2. Its function is as follows. Plays an important role in the de novo pathway of purine nucleotide biosynthesis. Catalyzes the first committed step in the biosynthesis of AMP from IMP. In Bifidobacterium adolescentis (strain ATCC 15703 / DSM 20083 / NCTC 11814 / E194a), this protein is Adenylosuccinate synthetase.